A 276-amino-acid polypeptide reads, in one-letter code: Ribosomal RNA small subunit methyltransferase A (276 aa).

6 residues coordinate S-adenosyl-L-methionine: N27, L29, G54, E75, D101, and N122.

It belongs to the class I-like SAM-binding methyltransferase superfamily. rRNA adenine N(6)-methyltransferase family. RsmA subfamily.

Its subcellular location is the cytoplasm. The enzyme catalyses adenosine(1518)/adenosine(1519) in 16S rRNA + 4 S-adenosyl-L-methionine = N(6)-dimethyladenosine(1518)/N(6)-dimethyladenosine(1519) in 16S rRNA + 4 S-adenosyl-L-homocysteine + 4 H(+). Functionally, specifically dimethylates two adjacent adenosines (A1518 and A1519) in the loop of a conserved hairpin near the 3'-end of 16S rRNA in the 30S particle. May play a critical role in biogenesis of 30S subunits. This chain is Ribosomal RNA small subunit methyltransferase A, found in Brucella abortus biovar 1 (strain 9-941).